A 134-amino-acid chain; its full sequence is Lymphocyte antigen 6S (134 aa).

Residues methionine 1 to glycine 26 form the signal peptide. One can recognise a UPAR/Ly6 domain in the interval arginine 28 to cysteine 76. Intrachain disulfides connect cysteine 29-cysteine 53, cysteine 32-cysteine 41, cysteine 76-cysteine 98, and cysteine 99-cysteine 104. Asparagine 105 is lipidated: GPI-anchor amidated asparagine. A propeptide spans alanine 106–leucine 134 (removed in mature form).

The protein resides in the cell membrane. The chain is Lymphocyte antigen 6S from Homo sapiens (Human).